The primary structure comprises 1939 residues: Myosin-8 (1939 aa).

The Myosin N-terminal SH3-like domain occupies 35 to 84 (DAKTSVFVAEPKASYVKSTIQSKEGGKVTVKTEGGATLTVREDQVFPMNP). 2 positions are modified to phosphothreonine: threonine 66 and threonine 71. Residues 88 to 783 (DKIEDMAMMT…LLGLLEEMRD (696 aa)) form the Myosin motor domain. Position 132 is an N6,N6,N6-trimethyllysine (lysine 132). 181–188 (GESGAGKT) contributes to the ATP binding site. Residue tyrosine 391 is modified to Phosphotyrosine. Threonine 421 is subject to Phosphothreonine. A Phosphotyrosine modification is found at tyrosine 426. Serine 627 is subject to Phosphoserine. Residues 660-682 (LNKLMTNLRSTHPHFVRCIIPNE) are actin-binding. The residue at position 758 (histidine 758) is a Pros-methylhistidine. The actin-binding stretch occupies residues 762–776 (KFGHTKVFFKAGLLG). Positions 783–815 (DEKLSQIITRTQAVCRGFLMRVEYQKMLQRREA) constitute an IQ domain. A coiled-coil region spans residues 844 to 1939 (LLKSAETEKE…REVHTKISAE (1096 aa)). Residues serine 1093, serine 1097, serine 1163, and serine 1238 each carry the phosphoserine modification. A Phosphothreonine modification is found at threonine 1242. The residue at position 1244 (serine 1244) is a Phosphoserine. Phosphothreonine is present on threonine 1256. Residue serine 1262 is modified to Phosphoserine. Phosphothreonine is present on residues threonine 1266 and threonine 1287. Serine 1293, serine 1304, and serine 1307 each carry phosphoserine. At tyrosine 1465 the chain carries Phosphotyrosine. At threonine 1468 the chain carries Phosphothreonine. Serine 1475 carries the post-translational modification Phosphoserine. Tyrosine 1493 bears the Phosphotyrosine mark. Serine 1496 is subject to Phosphoserine. Threonine 1502 carries the post-translational modification Phosphothreonine. Serine 1515 bears the Phosphoserine mark. Threonine 1518 bears the Phosphothreonine mark. Phosphoserine is present on residues serine 1555, serine 1575, serine 1601, serine 1604, serine 1715, and serine 1727. Threonine 1731 carries the phosphothreonine modification. Serine 1740 is subject to Phosphoserine.

The protein belongs to the TRAFAC class myosin-kinesin ATPase superfamily. Myosin family. Muscle myosin is a hexameric protein that consists of 2 heavy chain subunits (MHC), 2 alkali light chain subunits (MLC) and 2 regulatory light chain subunits (MLC-2).

It localises to the cytoplasm. Its subcellular location is the myofibril. Its function is as follows. Muscle contraction. The chain is Myosin-8 (MYH8) from Canis lupus familiaris (Dog).